Consider the following 407-residue polypeptide: 4-hydroxy-3-methylbut-2-en-1-yl diphosphate synthase (ferredoxin) (407 aa).

Positions 312, 315, 346, and 353 each coordinate [4Fe-4S] cluster.

This sequence belongs to the IspG family. The cofactor is [4Fe-4S] cluster.

It carries out the reaction (2E)-4-hydroxy-3-methylbut-2-enyl diphosphate + 2 oxidized [2Fe-2S]-[ferredoxin] + H2O = 2-C-methyl-D-erythritol 2,4-cyclic diphosphate + 2 reduced [2Fe-2S]-[ferredoxin] + H(+). It functions in the pathway isoprenoid biosynthesis; isopentenyl diphosphate biosynthesis via DXP pathway; isopentenyl diphosphate from 1-deoxy-D-xylulose 5-phosphate: step 5/6. Functionally, converts 2C-methyl-D-erythritol 2,4-cyclodiphosphate (ME-2,4cPP) into 1-hydroxy-2-methyl-2-(E)-butenyl 4-diphosphate. The sequence is that of 4-hydroxy-3-methylbut-2-en-1-yl diphosphate synthase (ferredoxin) from Synechococcus elongatus (strain ATCC 33912 / PCC 7942 / FACHB-805) (Anacystis nidulans R2).